The sequence spans 519 residues: Molybdate transporter 1 (519 aa).

The next 7 membrane-spanning stretches (helical) occupy residues 98 to 118, 164 to 184, 370 to 390, 412 to 432, 436 to 456, 464 to 484, and 485 to 505; these read LLHA…SQAI, LGTE…ATTL, AVAL…AMPC, ILLG…LVVL, FPQP…ASVV, GYTF…TGTG, and FLVG…VAAA.

It belongs to the SLC26A/SulP transporter (TC 2.A.53) family.

The protein resides in the membrane. 60% inhibition by 20 uM tungstate or by lack of glucose in the medium, but no inhibition by sulfate. High affinity molybdate transporter. Acts through an energy-dependent process. This is Molybdate transporter 1 (MOT1) from Chlamydomonas reinhardtii (Chlamydomonas smithii).